Consider the following 525-residue polypeptide: BTB/POZ domain-containing protein 2 (525 aa).

The disordered stretch occupies residues 1-86 (MAAGGSGGRA…AEEAAGPGAA (86 aa)). The segment covering 16-26 (VGVGPGTGGSP) has biased composition (gly residues). Residues 27–55 (GPSANAAATPAPGNAAAAAAAAAAAAAAP) are compositionally biased toward low complexity. The segment covering 56–65 (GPTPPAPPGP) has biased composition (pro residues). The segment covering 66-86 (GTDAQAAGAERAEEAAGPGAA) has biased composition (low complexity). The 71-residue stretch at 117 to 187 (CDVHFLVGKG…LYSDEVQIGP (71 aa)) folds into the BTB domain.

Interacts with topoisomerase 1 and with TRIM5 isoform Delta.

The protein resides in the cytoplasm. The polypeptide is BTB/POZ domain-containing protein 2 (BTBD2) (Homo sapiens (Human)).